The sequence spans 154 residues: MNAQKGFTLIELMIVIAIIGILAAIALPAYQDYIARAQVSEAFTLADGLKTSISTNRQNGRCFADGKDTAADGVDIITGKYGKATILEENPNTADGLICGIYYEFNTTGVSDKLIGKTIALKADEKAGKLVLETVNSKTTNVENKYLPSAFKKP.

The propeptide at 1–6 (MNAQKG) is leader sequence. At F7 the chain carries N-methylphenylalanine. The chain crosses the membrane as a helical span at residues 7-29 (FTLIELMIVIAIIGILAAIALPA).

Belongs to the N-Me-Phe pilin family. The pili are polar flexible filaments of about 5.4 nanometers diameter and 2.5 micrometers average length; they consist of only a single polypeptide chain arranged in a helical configuration of five subunits per turn in the assembled pilus.

Its subcellular location is the fimbrium. The protein resides in the membrane. The sequence is that of Fimbrial protein (tfpA) from Moraxella nonliquefaciens.